The primary structure comprises 239 residues: Phosducin-like protein 3 (239 aa).

N-acetylmethionine is present on methionine 1. The Phosducin domain occupies 32 to 180 (EAEEEQRILQ…EGDIKAQFIG (149 aa)). Residue serine 43 is modified to Phosphoserine. Positions 91 to 239 (FGEVLEISGK…MKRDSDSEGD (149 aa)) are thioredoxin fold. Interaction with XIAP regions lie at residues 97–99 (ISG) and 153–155 (TCI). Residues serine 234 and serine 236 each carry the phosphoserine modification.

It belongs to the phosducin family. As to quaternary structure, interacts (via thioredoxin fold region) with KDR/VEGFR2 (via juxtamembrane domain). Forms ternary complexes with the chaperonin CCT complex and actin substrate, leading to inhibition of actin folding. Interacts with XIAP (via BIR 3 and RING domain). Interacts with HSP90AA1 and HSP90AB1. In terms of processing, N-terminal methionine acetylation destabilizes the protein. Expressed in endothelial cells (at protein level). Expressed in all tissues examined including spleen, thymus, prostate, testis, ovary, small intestine and colon.

It is found in the cytoplasm. The protein resides in the perinuclear region. It localises to the endoplasmic reticulum. In terms of biological role, acts as a chaperone for the angiogenic VEGF receptor KDR/VEGFR2, increasing its abundance by inhibiting its ubiquitination and degradation. Inhibits the folding activity of the chaperonin-containing T-complex (CCT) which leads to inhibition of cytoskeletal actin folding. Acts as a chaperone during heat shock alongside HSP90 and HSP40/70 chaperone complexes. Modulates the activation of caspases during apoptosis. This is Phosducin-like protein 3 (PDCL3) from Homo sapiens (Human).